Reading from the N-terminus, the 483-residue chain is MKHIVKNIHFVGIGGAGMSGIAEVLLNLGYRVTGSDLGSSATTQRLATLGATIMQGHAPEHVIGANAVVVSTAVRGDNPEVLAARAKRIPIVPRAVMLAELMRLKQGIAIAGTHGKTTTTSLVASVLAEGGLDPTFVIGGRLNSAGANARLGTGDFIVAEADESDASFLNLFPVIEVITNIDADHMDTYGHDFARLKQAFIEFTQRLPFYGIAVLCVDDPNVREILPFVSKPVVRYGFAEDAQVRAVNARAVDGRMEFTVIRQLNGHAEPPLSITLNLPGLHNVQNALAAIAIATELEVPDEAIVKALAEFNGVGRRFQRYGEVPTADGKGHFTLIDDYGHHPVEMAATLAAARGAFPDRRLVLSFQPHRFTRTRDCFEDFVKVLGTVDALLLAEVYAAGEPPIIAADGRALTRALRVANKIEPVFVEQIEDMPQAILDAAQDGDVVITMGAGSIGQVPGQVVALQAQARTANVVDLNGGAAA.

112-118 (GTHGKTT) is a binding site for ATP.

The protein belongs to the MurCDEF family.

The protein resides in the cytoplasm. It carries out the reaction UDP-N-acetyl-alpha-D-muramate + L-alanine + ATP = UDP-N-acetyl-alpha-D-muramoyl-L-alanine + ADP + phosphate + H(+). The protein operates within cell wall biogenesis; peptidoglycan biosynthesis. Its function is as follows. Cell wall formation. The polypeptide is UDP-N-acetylmuramate--L-alanine ligase (Ralstonia pickettii (strain 12J)).